Here is a 314-residue protein sequence, read N- to C-terminus: MSRPRRRGRDIHGVLLLDKPQGMSSNDVLQKVKRIYNANRAGHTGALDPLATGMLPICLGEATKFSQYLLDSDKRYRVIARLGQRTDTSDADGQIVQERPVTFSAEQLASALETFRGDIEQIPSMYSALKYQGKKLYEYARQGIEVPREARPITVYELLFIRHEGNELELEVHCSKGTYIRTIIDDLGEKLGCGAHVTYLRRLTVSKYPVDRMVTLEHLQTLVAQAEQQGVPAAQWLDPLLMPMDSPASDYPVVNLPLTSSVYFKNGNPVRTTGAPLKGLVRVTEGEDDKFIGMGEIDDEGRVAPRRLVVEYPA.

H43 is a substrate binding site. The active-site Nucleophile is D48. Substrate contacts are provided by Y76, Y179, and L200.

This sequence belongs to the pseudouridine synthase TruB family. Type 1 subfamily.

It carries out the reaction uridine(55) in tRNA = pseudouridine(55) in tRNA. Functionally, responsible for synthesis of pseudouridine from uracil-55 in the psi GC loop of transfer RNAs. The sequence is that of tRNA pseudouridine synthase B from Salmonella paratyphi A (strain ATCC 9150 / SARB42).